We begin with the raw amino-acid sequence, 539 residues long: Phosphoenolpyruvate carboxykinase (ATP) (539 aa).

Residues arginine 64, tyrosine 206, and lysine 212 each coordinate substrate. ATP-binding positions include lysine 212, histidine 231, and 247–255 (GLSGTGKTT). Mn(2+)-binding residues include lysine 212 and histidine 231. Aspartate 268 is a binding site for Mn(2+). Residues glutamate 296, arginine 332, 448–449 (RI), and threonine 454 each bind ATP. Residue arginine 332 participates in substrate binding.

It belongs to the phosphoenolpyruvate carboxykinase (ATP) family. Monomer. Mn(2+) is required as a cofactor.

It is found in the cytoplasm. It catalyses the reaction oxaloacetate + ATP = phosphoenolpyruvate + ADP + CO2. The protein operates within carbohydrate biosynthesis; gluconeogenesis. Its function is as follows. Involved in the gluconeogenesis. Catalyzes the conversion of oxaloacetate (OAA) to phosphoenolpyruvate (PEP) through direct phosphoryl transfer between the nucleoside triphosphate and OAA. This is Phosphoenolpyruvate carboxykinase (ATP) from Salmonella arizonae (strain ATCC BAA-731 / CDC346-86 / RSK2980).